We begin with the raw amino-acid sequence, 117 residues long: Transcription elongation factor A protein-like 8 (117 aa).

Composition is skewed to basic and acidic residues over residues 1-24 (MQKS…DRPL) and 61-74 (YKED…DPEE). The interval 1–74 (MQKSCGENER…SPVRHLDPEE (74 aa)) is disordered. Residues 73–100 (EEMIRGADELERLREEIRRVRNKFVMMH) adopt a coiled-coil conformation.

It belongs to the TFS-II family. TFA subfamily.

Its subcellular location is the nucleus. May be involved in transcriptional regulation. This Bos taurus (Bovine) protein is Transcription elongation factor A protein-like 8 (TCEAL8).